A 640-amino-acid polypeptide reads, in one-letter code: 1,4-alpha-glucan branching enzyme GlgB (640 aa).

Asp-317 serves as the catalytic Nucleophile. Glu-370 (proton donor) is an active-site residue.

This sequence belongs to the glycosyl hydrolase 13 family. GlgB subfamily. As to quaternary structure, monomer.

It carries out the reaction Transfers a segment of a (1-&gt;4)-alpha-D-glucan chain to a primary hydroxy group in a similar glucan chain.. Its pathway is glycan biosynthesis; glycogen biosynthesis. Its function is as follows. Catalyzes the formation of the alpha-1,6-glucosidic linkages in glycogen by scission of a 1,4-alpha-linked oligosaccharide from growing alpha-1,4-glucan chains and the subsequent attachment of the oligosaccharide to the alpha-1,6 position. The chain is 1,4-alpha-glucan branching enzyme GlgB from Nitratidesulfovibrio vulgaris (strain ATCC 29579 / DSM 644 / CCUG 34227 / NCIMB 8303 / VKM B-1760 / Hildenborough) (Desulfovibrio vulgaris).